Here is a 370-residue protein sequence, read N- to C-terminus: Proto-oncogene Wnt-1 (370 aa).

An N-terminal signal peptide occupies residues 1-27; the sequence is MGLWALLPSWVSTTLLLALTALPAALA. Asparagine 29 is a glycosylation site (N-linked (GlcNAc...) asparagine). Intrachain disulfides connect cysteine 93-cysteine 104, cysteine 143-cysteine 151, cysteine 153-cysteine 170, cysteine 218-cysteine 232, cysteine 220-cysteine 227, cysteine 299-cysteine 330, cysteine 315-cysteine 325, cysteine 329-cysteine 369, cysteine 345-cysteine 360, cysteine 347-cysteine 357, and cysteine 352-cysteine 353. The O-palmitoleoyl serine; by PORCN moiety is linked to residue serine 224. 2 N-linked (GlcNAc...) asparagine glycosylation sites follow: asparagine 316 and asparagine 346. Residue asparagine 359 is glycosylated (N-linked (GlcNAc...) asparagine).

It belongs to the Wnt family. Forms a soluble 1:1 complex with AFM; this prevents oligomerization and is required for prolonged biological activity. The complex with AFM may represent the physiological form in body fluids. Interacts with PORCN. Interacts with RSPO1, RSPO2 and RSPO3. Interacts with WLS. Post-translationally, palmitoleoylation is required for efficient binding to frizzled receptors. Palmitoleoylation is necessary for proper trafficking to cell surface. Depalmitoleoylated by NOTUM, leading to inhibit Wnt signaling pathway. As to expression, testis and mid-gestational embryos. In the testis, detected only in postmeiotic germ cells undergoing differentiation from round spermatids into mature spermatozoa. In the embryos, expression is restricted to the developing CNS in regions of the neural tube other than the telencephalon. Expressed in osteoblast; expression levels increase with advancing osteoblast differentiation. Expressed in the brain, femur, spleen, and hematopoietic bone marrow.

The protein resides in the secreted. Its subcellular location is the extracellular space. The protein localises to the extracellular matrix. Ligand for members of the frizzled family of seven transmembrane receptors. Acts in the canonical Wnt signaling pathway by promoting beta-catenin-dependent transcriptional activation. In some developmental processes, is also a ligand for the coreceptor RYK, thus triggering Wnt signaling. Plays an essential role in the development of the embryonic brain and central nervous system (CNS). Has a role in osteoblast function, bone development and bone homeostasis. This is Proto-oncogene Wnt-1 (Wnt1) from Mus musculus (Mouse).